The chain runs to 494 residues: Glutamyl-tRNA(Gln) amidotransferase subunit A (494 aa).

Residues Lys81 and Ser156 each act as charge relay system in the active site. Ser180 functions as the Acyl-ester intermediate in the catalytic mechanism.

Belongs to the amidase family. GatA subfamily. Heterotrimer of A, B and C subunits.

The enzyme catalyses L-glutamyl-tRNA(Gln) + L-glutamine + ATP + H2O = L-glutaminyl-tRNA(Gln) + L-glutamate + ADP + phosphate + H(+). Functionally, allows the formation of correctly charged Gln-tRNA(Gln) through the transamidation of misacylated Glu-tRNA(Gln) in organisms which lack glutaminyl-tRNA synthetase. The reaction takes place in the presence of glutamine and ATP through an activated gamma-phospho-Glu-tRNA(Gln). In Mycobacterium tuberculosis (strain ATCC 25177 / H37Ra), this protein is Glutamyl-tRNA(Gln) amidotransferase subunit A.